The following is a 161-amino-acid chain: Nucleotide-binding protein Pput_4372 (161 aa).

This sequence belongs to the YajQ family.

Its function is as follows. Nucleotide-binding protein. The chain is Nucleotide-binding protein Pput_4372 from Pseudomonas putida (strain ATCC 700007 / DSM 6899 / JCM 31910 / BCRC 17059 / LMG 24140 / F1).